A 156-amino-acid chain; its full sequence is Arginine repressor (156 aa).

Belongs to the ArgR family.

It is found in the cytoplasm. It functions in the pathway amino-acid biosynthesis; L-arginine biosynthesis [regulation]. In terms of biological role, regulates arginine biosynthesis genes. This is Arginine repressor from Photobacterium profundum (strain SS9).